The following is an 866-amino-acid chain: Primer-independent DNA polymerase PolB (866 aa).

Residues 50–286 (SDLTLHIGFD…DRVPATIGAM (237 aa)) form an exonuclease domain region. Residues 287-385 (AVSRFTKTLK…GLLDILTPDY (99 aa)) form a palm1 domain region. A TPR1 domain region spans residues 386–481 (GNIRLSKNPD…NSESTSVFLP (96 aa)). The interval 482–522 (FVQQVRENRNRHIKGSLEEKFWKEIGNSLYGKLAQGLRAKT) is fingers domain. The segment at 523 to 549 (AFDTARGLNRSLPPSSVTQPFFAAHVT) is TPR2 domain. The interval 550–678 (GFIRAVVGEL…PGQTLSRSTL (129 aa)) is palm2 domain. The thumb domain stretch occupies residues 679-866 (ISTREMWLSE…RKYPTFCLPV (188 aa)).

It depends on Mn(2+) as a cofactor.

It catalyses the reaction DNA(n) + a 2'-deoxyribonucleoside 5'-triphosphate = DNA(n+1) + diphosphate. Functionally, DNA polymerase with primer-independent templated DNA polymerization activity, primer-dependent DNA polymerization activity with strand displacement, translesion synthesis activity across non-bulky base damage, 3'-5' exodeoxyribonuclease activity, and de novo primer synthesis activity. The enzyme is processive and faithful. Translation synthesis across abasic sites is coupled to de novo primer synthesis. Overexpression of wild-type protein increases survival of cells upon mitomycin C or UV treatment. The chain is Primer-independent DNA polymerase PolB (pi-polB) from Escherichia coli.